A 187-amino-acid chain; its full sequence is uncharacterized protein (187 aa).

A run of 4 helical transmembrane segments spans residues 29-50 (IFIDIFIGVWAFILAVVWVYWI), 70-92 (FVIGYFLTFVIVAWLTSAAINAY), 128-147 (IFFALTFFSIGVISDFSVLR), and 154-176 (LALVYFVCLFGFIIWIGLAISYL).

It localises to the cell membrane. This is an uncharacterized protein from Archaeoglobus fulgidus (strain ATCC 49558 / DSM 4304 / JCM 9628 / NBRC 100126 / VC-16).